Here is a 315-residue protein sequence, read N- to C-terminus: 7,8-didemethyl-8-hydroxy-5-deazariboflavin synthase (315 aa).

Residues 6–237 enclose the Radical SAM core domain; the sequence is ITYSPAFTLV…EDITIQIPAN (232 aa). Positions 20, 24, and 27 each coordinate [4Fe-4S] cluster.

This sequence belongs to the radical SAM superfamily. CofG family. Consists of two subunits, CofG and CofH. [4Fe-4S] cluster is required as a cofactor.

The enzyme catalyses 5-amino-5-(4-hydroxybenzyl)-6-(D-ribitylimino)-5,6-dihydrouracil + S-adenosyl-L-methionine = 7,8-didemethyl-8-hydroxy-5-deazariboflavin + 5'-deoxyadenosine + L-methionine + NH4(+) + H(+). It participates in cofactor biosynthesis; coenzyme F0 biosynthesis. Functionally, catalyzes the radical-mediated synthesis of 7,8-didemethyl-8-hydroxy-5-deazariboflavin from 5-amino-5-(4-hydroxybenzyl)-6-(D-ribitylimino)-5,6-dihydrouracil. This chain is 7,8-didemethyl-8-hydroxy-5-deazariboflavin synthase, found in Thermosynechococcus vestitus (strain NIES-2133 / IAM M-273 / BP-1).